The following is a 151-amino-acid chain: Deoxyuridine 5'-triphosphate nucleotidohydrolase (151 aa).

Substrate-binding positions include arginine 70–glycine 72, asparagine 83, leucine 87–aspartate 89, and methionine 97.

This sequence belongs to the dUTPase family. It depends on Mg(2+) as a cofactor.

The enzyme catalyses dUTP + H2O = dUMP + diphosphate + H(+). The protein operates within pyrimidine metabolism; dUMP biosynthesis; dUMP from dCTP (dUTP route): step 2/2. Its function is as follows. This enzyme is involved in nucleotide metabolism: it produces dUMP, the immediate precursor of thymidine nucleotides and it decreases the intracellular concentration of dUTP so that uracil cannot be incorporated into DNA. In Ectopseudomonas mendocina (strain ymp) (Pseudomonas mendocina), this protein is Deoxyuridine 5'-triphosphate nucleotidohydrolase.